The following is an 872-amino-acid chain: Leucine--tRNA ligase (872 aa).

The short motif at 56–66 (PYPSGNLHMGH) is the 'HIGH' region element. Positions 629–633 (KMSKS) match the 'KMSKS' region motif. Position 632 (K632) interacts with ATP.

It belongs to the class-I aminoacyl-tRNA synthetase family.

The protein localises to the cytoplasm. It carries out the reaction tRNA(Leu) + L-leucine + ATP = L-leucyl-tRNA(Leu) + AMP + diphosphate. The sequence is that of Leucine--tRNA ligase from Prochlorococcus marinus (strain MIT 9211).